A 284-amino-acid chain; its full sequence is L-ribulose-5-phosphate 3-epimerase UlaE (284 aa).

This sequence belongs to the L-ribulose-5-phosphate 3-epimerase family.

The catalysed reaction is L-ribulose 5-phosphate = L-xylulose 5-phosphate. Its pathway is cofactor degradation; L-ascorbate degradation; D-xylulose 5-phosphate from L-ascorbate: step 3/4. Its function is as follows. Catalyzes the isomerization of L-xylulose-5-phosphate to L-ribulose-5-phosphate. Is involved in the anaerobic L-ascorbate utilization. The sequence is that of L-ribulose-5-phosphate 3-epimerase UlaE from Shigella boydii serotype 18 (strain CDC 3083-94 / BS512).